The primary structure comprises 264 residues: Cancer/testis antigen 55 (264 aa).

Residues 242–264 form a disordered region; it reads SSSGFQDDGGLGRPKRERRSQSI. A compositionally biased stretch (basic residues) spans 254-264; the sequence is RPKRERRSQSI.

As to quaternary structure, interacts with GABARAP; this interaction may be important for GABARAP protein stability. Isoform 1 interacts with LAMP2; this interaction may be important for LAMP2 protein stability. As to expression, testis-specific. Expressed in spermatozoa (at protein level).

The protein resides in the cytoplasm. It localises to the cytoplasmic vesicle. It is found in the secretory vesicle. Its subcellular location is the acrosome. The protein localises to the cell projection. The protein resides in the cilium. It localises to the flagellum. Plays a role in spermatogenesis, possibly acting in the regulation of the autophagy pathway. This is Cancer/testis antigen 55 (CT55) from Homo sapiens (Human).